A 295-amino-acid polypeptide reads, in one-letter code: MGHIFEGVGVALATPFTHNEVDFDALRRHVKYLLDNNAKSIVVNGTTAENPTLTDEEKDQILEVVVNVVDGRVPVIAGTGTNNTQKSIQASVRAREIGADAIMLITPYYNKTNQRGLIAHFTTIADAVKLPVVLYNVPSRTNMTIDAETVETLSENEYIVALKDATNDFDYLEDLKQRLNLDEFALYSGNDDNIVDYFNQGGHGVISVVANVIPNAFQSLYDAKQNDENIQSQFQPIQTLLDALAVDVNPIPVKALTAVEGFGNYEVRLPLVTLEDSDRQKLEQAYEQFKVGGNS.

Thr47 is a pyruvate binding site. Tyr135 functions as the Proton donor/acceptor in the catalytic mechanism. Catalysis depends on Lys163, which acts as the Schiff-base intermediate with substrate. A pyruvate-binding site is contributed by Ile206.

Belongs to the DapA family. Homodimer.

The protein localises to the cytoplasm. It carries out the reaction L-aspartate 4-semialdehyde + pyruvate = (2S,4S)-4-hydroxy-2,3,4,5-tetrahydrodipicolinate + H2O + H(+). It participates in amino-acid biosynthesis; L-lysine biosynthesis via DAP pathway; (S)-tetrahydrodipicolinate from L-aspartate: step 3/4. Its function is as follows. Catalyzes the condensation of (S)-aspartate-beta-semialdehyde [(S)-ASA] and pyruvate to 4-hydroxy-tetrahydrodipicolinate (HTPA). The protein is 4-hydroxy-tetrahydrodipicolinate synthase of Staphylococcus saprophyticus subsp. saprophyticus (strain ATCC 15305 / DSM 20229 / NCIMB 8711 / NCTC 7292 / S-41).